Here is a 425-residue protein sequence, read N- to C-terminus: Serine hydroxymethyltransferase 2 (425 aa).

Residues Leu-121 and 125-127 each bind (6S)-5,6,7,8-tetrahydrofolate; that span reads GHL. N6-(pyridoxal phosphate)lysine is present on Lys-230.

It belongs to the SHMT family. Homodimer. Pyridoxal 5'-phosphate serves as cofactor.

Its subcellular location is the cytoplasm. The enzyme catalyses (6R)-5,10-methylene-5,6,7,8-tetrahydrofolate + glycine + H2O = (6S)-5,6,7,8-tetrahydrofolate + L-serine. It participates in one-carbon metabolism; tetrahydrofolate interconversion. Its pathway is amino-acid biosynthesis; glycine biosynthesis; glycine from L-serine: step 1/1. Functionally, catalyzes the reversible interconversion of serine and glycine with tetrahydrofolate (THF) serving as the one-carbon carrier. This reaction serves as the major source of one-carbon groups required for the biosynthesis of purines, thymidylate, methionine, and other important biomolecules. Also exhibits THF-independent aldolase activity toward beta-hydroxyamino acids, producing glycine and aldehydes, via a retro-aldol mechanism. The chain is Serine hydroxymethyltransferase 2 from Mycobacterium bovis (strain ATCC BAA-935 / AF2122/97).